We begin with the raw amino-acid sequence, 357 residues long: DNA replication and repair protein RecF (357 aa).

An ATP-binding site is contributed by 30 to 37; sequence GANGSGKT.

It belongs to the RecF family.

The protein resides in the cytoplasm. Its function is as follows. The RecF protein is involved in DNA metabolism; it is required for DNA replication and normal SOS inducibility. RecF binds preferentially to single-stranded, linear DNA. It also seems to bind ATP. This Salmonella agona (strain SL483) protein is DNA replication and repair protein RecF.